Here is a 379-residue protein sequence, read N- to C-terminus: Subtilisin Carlsberg (379 aa).

A signal peptide spans 1–29; the sequence is MMRKKSFWLGMLTAFMLVFTMAFSDSASA. Positions 30–105 are excised as a propeptide; it reads AQPAKNVEKD…VEEDHVAHAL (76 aa). The 59-residue stretch at 44–102 folds into the Inhibitor I9 domain; it reads FKSGVKTASVKKDIIKESGGKVDKQFRIINAAKAKLDKEALKEVKNDPDVAYVEEDHVA. A Ca(2+)-binding site is contributed by Gln107. The 269-residue stretch at 110 to 378 folds into the Peptidase S8 domain; sequence PYGIPLIKAD…KGLINVEAAA (269 aa). Asp137 acts as the Charge relay system in catalysis. Asp146 contributes to the Ca(2+) binding site. Residue His168 is the Charge relay system of the active site. Residues Leu179, Asn181, Thr183, Val185, Ala273, Tyr275, and Val278 each contribute to the Ca(2+) site. The Charge relay system role is filled by Ser325.

Belongs to the peptidase S8 family. The cofactor is Ca(2+).

It localises to the secreted. It catalyses the reaction Hydrolysis of proteins with broad specificity for peptide bonds, and a preference for a large uncharged residue in P1. Hydrolyzes peptide amides.. Its activity is regulated as follows. Inhibited by p-chlorophenyl and 1-naphthyl boronic acid derivatives. Its function is as follows. Subtilisin is an extracellular alkaline serine protease, it catalyzes the hydrolysis of proteins and peptide amides. Shows high specificity for aromatic and hydrophobic amino acids in the P1 substrate position. May play an important role in the degradation of feather keratin. The chain is Subtilisin Carlsberg from Bacillus licheniformis.